The sequence spans 312 residues: uncharacterized protein (312 aa).

The next 8 helical transmembrane spans lie at 4–24 (IFLAGLAAGFQTTWTLGKVIF), 45–65 (LITPVMGLFGLSGEAAIPLVL), 75–95 (IAGILTLDLSVKEVFILAVML), 117–137 (VILAVRIGLAAVSAIVINLIW), 171–191 (GLGVLQLAAIVIPLMIIIQFL), 217–237 (TSMTMVTGLTIGLAYGAGVMI), 253–275 (AFIFLVACHAVVEDTLVFIPLGI), and 280–299 (LLLIRVTTAVLLTMAIAHTW).

The protein resides in the cell membrane. This is an uncharacterized protein from Bacillus subtilis (strain 168).